A 236-amino-acid polypeptide reads, in one-letter code: Thiamine-phosphate synthase (236 aa).

Residues 57 to 61 and asparagine 89 each bind 4-amino-2-methyl-5-(diphosphooxymethyl)pyrimidine; that span reads QLRDK. Residues aspartate 90 and aspartate 109 each coordinate Mg(2+). A 4-amino-2-methyl-5-(diphosphooxymethyl)pyrimidine-binding site is contributed by serine 128. 154–156 is a 2-[(2R,5Z)-2-carboxy-4-methylthiazol-5(2H)-ylidene]ethyl phosphate binding site; the sequence is TPS. Residue lysine 157 coordinates 4-amino-2-methyl-5-(diphosphooxymethyl)pyrimidine. Residues glycine 185 and 205–206 each bind 2-[(2R,5Z)-2-carboxy-4-methylthiazol-5(2H)-ylidene]ethyl phosphate; that span reads IS.

This sequence belongs to the thiamine-phosphate synthase family. It depends on Mg(2+) as a cofactor.

The enzyme catalyses 2-[(2R,5Z)-2-carboxy-4-methylthiazol-5(2H)-ylidene]ethyl phosphate + 4-amino-2-methyl-5-(diphosphooxymethyl)pyrimidine + 2 H(+) = thiamine phosphate + CO2 + diphosphate. The catalysed reaction is 2-(2-carboxy-4-methylthiazol-5-yl)ethyl phosphate + 4-amino-2-methyl-5-(diphosphooxymethyl)pyrimidine + 2 H(+) = thiamine phosphate + CO2 + diphosphate. It carries out the reaction 4-methyl-5-(2-phosphooxyethyl)-thiazole + 4-amino-2-methyl-5-(diphosphooxymethyl)pyrimidine + H(+) = thiamine phosphate + diphosphate. It functions in the pathway cofactor biosynthesis; thiamine diphosphate biosynthesis; thiamine phosphate from 4-amino-2-methyl-5-diphosphomethylpyrimidine and 4-methyl-5-(2-phosphoethyl)-thiazole: step 1/1. Functionally, condenses 4-methyl-5-(beta-hydroxyethyl)thiazole monophosphate (THZ-P) and 2-methyl-4-amino-5-hydroxymethyl pyrimidine pyrophosphate (HMP-PP) to form thiamine monophosphate (TMP). The protein is Thiamine-phosphate synthase of Roseiflexus sp. (strain RS-1).